The sequence spans 248 residues: PF03932 family protein CutC (248 aa).

This sequence belongs to the CutC family. In terms of assembly, homodimer.

The protein localises to the cytoplasm. The sequence is that of PF03932 family protein CutC from Salmonella newport (strain SL254).